The following is a 176-amino-acid chain: Outer membrane protein assembly factor BamE (176 aa).

An N-terminal signal peptide occupies residues 1–21 (MQNAKLMLTCLAFAGLAALAG). Residue Cys22 is the site of N-palmitoyl cysteine attachment. The S-diacylglycerol cysteine moiety is linked to residue Cys22. The tract at residues 121-176 (KEGSTTVTQPADQQKPEAQKEEPPKPGSTLEQLQREVDEAQPVPVPTPEPLDPSPQ) is disordered. Over residues 123–132 (GSTTVTQPAD) the composition is skewed to polar residues. Residues 134 to 144 (QKPEAQKEEPP) show a composition bias toward basic and acidic residues. The span at 163-176 (VPVPTPEPLDPSPQ) shows a compositional bias: pro residues.

Belongs to the BamE family. As to quaternary structure, part of the Bam complex.

The protein resides in the cell outer membrane. Part of the outer membrane protein assembly complex, which is involved in assembly and insertion of beta-barrel proteins into the outer membrane. May have a structural role in maintaining the cell envelope integrity. The polypeptide is Outer membrane protein assembly factor BamE (Pseudomonas aeruginosa (strain ATCC 15692 / DSM 22644 / CIP 104116 / JCM 14847 / LMG 12228 / 1C / PRS 101 / PAO1)).